Consider the following 338-residue polypeptide: 3-phosphoshikimate 1-carboxyvinyltransferase 2 (338 aa).

Arginine 25 provides a ligand contact to phosphoenolpyruvate. 3-phosphoshikimate contacts are provided by serine 72, serine 73, glutamine 74, serine 100, aspartate 225, and lysine 252. Residue glutamine 74 participates in phosphoenolpyruvate binding. Aspartate 225 functions as the Proton acceptor in the catalytic mechanism. Phosphoenolpyruvate is bound by residues arginine 256, arginine 298, and lysine 323.

This sequence belongs to the EPSP synthase family.

It localises to the plastid. The protein localises to the chloroplast. The catalysed reaction is 3-phosphoshikimate + phosphoenolpyruvate = 5-O-(1-carboxyvinyl)-3-phosphoshikimate + phosphate. It functions in the pathway metabolic intermediate biosynthesis; chorismate biosynthesis; chorismate from D-erythrose 4-phosphate and phosphoenolpyruvate: step 6/7. Its function is as follows. Catalyzes the transfer of the enolpyruvyl moiety of phosphoenolpyruvate (PEP) to the 5-hydroxyl of shikimate-3-phosphate (S3P) to produce enolpyruvyl shikimate-3-phosphate and inorganic phosphate. The protein is 3-phosphoshikimate 1-carboxyvinyltransferase 2 (EPSPS-2) of Nicotiana tabacum (Common tobacco).